The chain runs to 144 residues: Ribonuclease H (144 aa).

Residues M1–D141 form the RNase H type-1 domain. D9, E47, D69, and D133 together coordinate Mg(2+).

The protein belongs to the RNase H family. In terms of assembly, monomer. Requires Mg(2+) as cofactor.

It localises to the cytoplasm. It carries out the reaction Endonucleolytic cleavage to 5'-phosphomonoester.. Functionally, endonuclease that specifically degrades the RNA of RNA-DNA hybrids. The polypeptide is Ribonuclease H (Erythrobacter litoralis (strain HTCC2594)).